The primary structure comprises 72 residues: Protein kish-A (72 aa).

The signal sequence occupies residues 1–26 (MSAIFNFQSLLTVILLLICTCAYIRS). The Extracellular segment spans residues 27–53 (LAPSLLDRNKTGLLGIFWKCARIGERK). N-linked (GlcNAc...) asparagine glycosylation is present at Asn35. A helical transmembrane segment spans residues 54–71 (SPYVAVCCIVMAFSILFI). Position 72 (Gln72) is a topological domain, cytoplasmic.

The protein belongs to the KISH family.

It is found in the golgi apparatus membrane. Involved in the early part of the secretory pathway. In Bos taurus (Bovine), this protein is Protein kish-A (TMEM167A).